Consider the following 443-residue polypeptide: Trimethylamine monooxygenase (443 aa).

FAD-binding residues include D37, Q39, L45, and W46. Residues W70 and N72 each coordinate NADP(+). FAD contacts are provided by N72 and V125. Residues Y170, S202, S203, S205, and R226 each contribute to the NADP(+) site. 2 residues coordinate FAD: Q315 and T318. R409 lines the NADP(+) pocket.

It belongs to the FMO family. FAD is required as a cofactor.

It catalyses the reaction trimethylamine + NADPH + O2 = trimethylamine N-oxide + NADP(+) + H2O. In terms of biological role, catalyzes the oxidation of trimethylamine (TMA) to produce trimethylamine N-oxide (TMAO). In vitro, has a broad substrate specificity, oxidizing many nitrogen- and sulfur-containing compounds, including dimethylamine (DMA), dimethylsulfide (DMS) and dimethylsulfoxide (DMSO). This chain is Trimethylamine monooxygenase, found in Pelagibacter ubique (strain HTCC1002).